The following is a 362-amino-acid chain: 3-dehydroquinate synthase (362 aa).

NAD(+)-binding positions include 71–76, 105–109, 129–130, K142, and K151; these read DGEQYK, GVIGD, and TT. E184, H247, and H264 together coordinate Zn(2+).

The protein belongs to the sugar phosphate cyclases superfamily. Dehydroquinate synthase family. Requires NAD(+) as cofactor. Co(2+) is required as a cofactor. The cofactor is Zn(2+).

The protein resides in the cytoplasm. It catalyses the reaction 7-phospho-2-dehydro-3-deoxy-D-arabino-heptonate = 3-dehydroquinate + phosphate. Its pathway is metabolic intermediate biosynthesis; chorismate biosynthesis; chorismate from D-erythrose 4-phosphate and phosphoenolpyruvate: step 2/7. In terms of biological role, catalyzes the conversion of 3-deoxy-D-arabino-heptulosonate 7-phosphate (DAHP) to dehydroquinate (DHQ). This chain is 3-dehydroquinate synthase, found in Haemophilus ducreyi (strain 35000HP / ATCC 700724).